The chain runs to 224 residues: Transposase for insertion sequence element IS257 in transposon Tn4003 (224 aa).

The H-T-H motif DNA-binding region spans 33 to 52 (EILRGRGVNVHHSTVYRWVQ). The Integrase catalytic domain maps to 73–222 (WRIDETYIKI…SPCHEISIML (150 aa)).

Functionally, involved in the transposition of the insertion sequence. In Staphylococcus aureus, this protein is Transposase for insertion sequence element IS257 in transposon Tn4003.